The primary structure comprises 697 residues: Sentrin-specific protease (697 aa).

The segment covering 1–14 has biased composition (basic and acidic residues); the sequence is MSRRSDLSDKDSQS. 2 disordered regions span residues 1 to 47 and 365 to 387; these read MSRR…QGLG and SEESTSSSYRQHARSNSSESDSY. The short motif at 15-19 is the Nuclear localization signal element; the sequence is RKRHW. The Nuclear localization signal motif lies at 462–467; sequence KVEKKK. A protease region spans residues 501-664; it reads IQICKKDLAT…VFSCQFGEWA (164 aa). Residues His-585, Asp-602, and Cys-653 contribute to the active site.

This sequence belongs to the peptidase C48 family.

It is found in the nucleus envelope. Functionally, protease that deconjugates smo-1 from targeted proteins and may catalyze the processing of smo-1 to its mature form. This chain is Sentrin-specific protease (ulp-1), found in Caenorhabditis elegans.